The chain runs to 523 residues: NADH-ubiquinone oxidoreductase chain 2 (523 aa).

Transmembrane regions (helical) follow at residues 3–23 (LFGV…IPAI), 30–50 (IILL…NNIG), 62–82 (VTTI…LVLL), 110–130 (SVLA…SSLI), 135–155 (LISM…LATI), 170–190 (FLLG…LYSF), 212–232 (IEIS…AAPF), 246–266 (VVTT…ILEF), 281–301 (LLLI…LAQY), 306–326 (LLTY…AINN), 333–353 (FLFY…ILVA), 386–406 (GLSL…VGFF), 419–439 (GNFF…AYYL), and 490–510 (LVIA…TPLL).

The protein belongs to the complex I subunit 2 family.

The protein localises to the mitochondrion inner membrane. It carries out the reaction a ubiquinone + NADH + 5 H(+)(in) = a ubiquinol + NAD(+) + 4 H(+)(out). Its function is as follows. Core subunit of the mitochondrial membrane respiratory chain NADH dehydrogenase (Complex I) that is believed to belong to the minimal assembly required for catalysis. Complex I functions in the transfer of electrons from NADH to the respiratory chain. The immediate electron acceptor for the enzyme is believed to be ubiquinone. This Rhizopus oryzae (Mucormycosis agent) protein is NADH-ubiquinone oxidoreductase chain 2.